The chain runs to 132 residues: Large-conductance mechanosensitive channel (132 aa).

The next 3 membrane-spanning stretches (helical) occupy residues 14 to 34, 38 to 58, and 67 to 87; these read VVDL…VSSL, IITP…LHFG, and GNFI…FMFV.

It belongs to the MscL family. As to quaternary structure, homopentamer.

Its subcellular location is the cell membrane. Functionally, channel that opens in response to stretch forces in the membrane lipid bilayer. May participate in the regulation of osmotic pressure changes within the cell. This Bacillus cereus (strain ATCC 10987 / NRS 248) protein is Large-conductance mechanosensitive channel.